A 221-amino-acid chain; its full sequence is Probable septum site-determining protein MinC (221 aa).

Belongs to the MinC family. As to quaternary structure, interacts with MinD and FtsZ.

In terms of biological role, cell division inhibitor that blocks the formation of polar Z ring septums. Rapidly oscillates between the poles of the cell to destabilize FtsZ filaments that have formed before they mature into polar Z rings. Prevents FtsZ polymerization. The sequence is that of Probable septum site-determining protein MinC from Prochlorococcus marinus (strain SARG / CCMP1375 / SS120).